Reading from the N-terminus, the 90-residue chain is Large ribosomal subunit protein bL27 (90 aa).

Residues 1 to 22 (MAHKKAGGSSRNGRDSESKRLG) are disordered.

This sequence belongs to the bacterial ribosomal protein bL27 family.

This Allorhizobium ampelinum (strain ATCC BAA-846 / DSM 112012 / S4) (Agrobacterium vitis (strain S4)) protein is Large ribosomal subunit protein bL27.